A 158-amino-acid chain; its full sequence is Small ribosomal subunit protein uS7 (158 aa).

It belongs to the universal ribosomal protein uS7 family. As to quaternary structure, part of the 30S ribosomal subunit. Contacts proteins S9 and S11.

Its function is as follows. One of the primary rRNA binding proteins, it binds directly to 16S rRNA where it nucleates assembly of the head domain of the 30S subunit. Is located at the subunit interface close to the decoding center, probably blocks exit of the E-site tRNA. The protein is Small ribosomal subunit protein uS7 of Granulibacter bethesdensis (strain ATCC BAA-1260 / CGDNIH1).